The sequence spans 264 residues: tRNA pseudouridine synthase A (264 aa).

Asp-51 acts as the Nucleophile in catalysis. Tyr-109 is a binding site for substrate.

It belongs to the tRNA pseudouridine synthase TruA family. Homodimer.

The catalysed reaction is uridine(38/39/40) in tRNA = pseudouridine(38/39/40) in tRNA. In terms of biological role, formation of pseudouridine at positions 38, 39 and 40 in the anticodon stem and loop of transfer RNAs. The chain is tRNA pseudouridine synthase A from Polaromonas sp. (strain JS666 / ATCC BAA-500).